A 764-amino-acid polypeptide reads, in one-letter code: Acylamino-acid-releasing enzyme (764 aa).

Residues Ser618, Asp707, and His739 each act as charge relay system in the active site.

The protein belongs to the peptidase S9C family. In terms of assembly, homotetramer.

It is found in the cytoplasm. The protein resides in the nucleus. It carries out the reaction Cleavage of an N-acetyl or N-formyl amino acid from the N-terminus of a polypeptide.. Strongly inhibited by the serine protease inhibitor diisopropyl fluorophosphate. Its function is as follows. Catalyzes the hydrolysis of the N-terminal peptide bond of an N-acetylated peptide to generate an N-acetylated amino acid and a peptide with a free N-terminus. Can degrade the glycated RuBisCO (ribulose-1,5-bisphosphate carboxylase/oxygenase) protein but not the native protein. May be involved in the elimination of glycated proteins. Plays a homeostatic role in sustaining the cytoplasmic antioxidative system. May contribute to the elimination of the oxidized proteins in the cytoplasm. The sequence is that of Acylamino-acid-releasing enzyme from Arabidopsis thaliana (Mouse-ear cress).